The sequence spans 641 residues: Protein TIC 62, chloroplastic (641 aa).

The N-terminal 63 residues, Met-1–Arg-63, are a transit peptide targeting the chloroplast. N-acetylalanine is present on Ala-64. Residue Val-84–Arg-113 participates in NADP(+) binding. Residues Ser-328–His-641 are disordered. Residues Ala-359 to Val-372 are compositionally biased toward basic and acidic residues. 2 consecutive repeat copies span residues Pro-376–Thr-397 and Pro-444–Ser-465. The tract at residues Pro-376–Val-638 is 4 X 22 AA approximate repeats. The span at Ile-393–Pro-402 shows a compositional bias: low complexity. Over residues Lys-435–Pro-444 the composition is skewed to basic and acidic residues. The span at Ser-485–Ser-528 shows a compositional bias: low complexity. Copy 3 of the repeat occupies Pro-532–Thr-553. A compositionally biased stretch (polar residues) spans Ala-599 to Gln-612. The stretch at Pro-617–Val-638 is repeat 4. Over residues Pro-630–His-641 the composition is skewed to pro residues.

In terms of assembly, part of the Tic complex. Interacts with TIC110 and TIC55. Interacts with LFNR1 and LFNR2. Component of high molecular weight thylakoid LFNRs-containing protein complexes containing LIR1, LFNR1, LFNR2, TIC62 and TROL proteins. Expressed in cotyledons and leaves, but not in roots.

Its subcellular location is the plastid. The protein localises to the chloroplast inner membrane. The protein resides in the chloroplast stroma. It is found in the chloroplast thylakoid. Its function is as follows. Involved in protein precursor import into chloroplasts. Part of the redox regulon consisting of TIC32, TIC 55 and TIC62. Acts as a membrane anchor of LFNR1 and LFNR2. Has a NADPH-dependent dehydrogenase activity, but only after preincubation with lipids. This is Protein TIC 62, chloroplastic from Arabidopsis thaliana (Mouse-ear cress).